We begin with the raw amino-acid sequence, 375 residues long: N5-carboxyaminoimidazole ribonucleotide synthase (375 aa).

ATP-binding positions include R108, K148, 153–159 (GYDGKGQ), 183–186 (EQYL), E191, H214, and 266–267 (NE). The region spanning 112–296 (KQTLLEANTQ…QFDTHILAIT (185 aa)) is the ATP-grasp domain.

This sequence belongs to the PurK/PurT family. As to quaternary structure, homodimer.

It carries out the reaction 5-amino-1-(5-phospho-beta-D-ribosyl)imidazole + hydrogencarbonate + ATP = 5-carboxyamino-1-(5-phospho-D-ribosyl)imidazole + ADP + phosphate + 2 H(+). It participates in purine metabolism; IMP biosynthesis via de novo pathway; 5-amino-1-(5-phospho-D-ribosyl)imidazole-4-carboxylate from 5-amino-1-(5-phospho-D-ribosyl)imidazole (N5-CAIR route): step 1/2. Functionally, catalyzes the ATP-dependent conversion of 5-aminoimidazole ribonucleotide (AIR) and HCO(3)(-) to N5-carboxyaminoimidazole ribonucleotide (N5-CAIR). This is N5-carboxyaminoimidazole ribonucleotide synthase from Staphylococcus epidermidis (strain ATCC 12228 / FDA PCI 1200).